The chain runs to 215 residues: Protein GrpE (215 aa).

Residues 1–28 (MKHTSDTPSNSDMPSDSQATQPNASATG) show a composition bias toward polar residues. Positions 1 to 52 (MKHTSDTPSNSDMPSDSQATQPNASATGQAAHAYSSQAQRASADAQAVAGDE) are disordered. The segment covering 29–52 (QAAHAYSSQAQRASADAQAVAGDE) has biased composition (low complexity).

It belongs to the GrpE family. As to quaternary structure, homodimer.

Its subcellular location is the cytoplasm. In terms of biological role, participates actively in the response to hyperosmotic and heat shock by preventing the aggregation of stress-denatured proteins, in association with DnaK and GrpE. It is the nucleotide exchange factor for DnaK and may function as a thermosensor. Unfolded proteins bind initially to DnaJ; upon interaction with the DnaJ-bound protein, DnaK hydrolyzes its bound ATP, resulting in the formation of a stable complex. GrpE releases ADP from DnaK; ATP binding to DnaK triggers the release of the substrate protein, thus completing the reaction cycle. Several rounds of ATP-dependent interactions between DnaJ, DnaK and GrpE are required for fully efficient folding. This is Protein GrpE from Ralstonia pickettii (strain 12J).